The following is a 377-amino-acid chain: MRYPVSTGIAAPAWFAFFCAWAGLWTFSLPVQAERIKDLASIQGIRPNQLIGYGLVVGLDGTGDQTVQTPFTIQSLNNMLMQLGINVPPGTNMRLRNVAAVMVTAALPPLAQPGQAIDVTVSSMGNARSLRGGTLLMTPLKGIDGQVYGVAQGNLLVGGIGAAASGSKVQVNHLNAGRIPGGATVERAVPVALGQNDMIRLELNTIDFSTAKRIVDAVNTRFGMGTAAALDGRAIQVRTPPESDQRVAFLAEMESLAINPAQMPARVIVNSRTGSVVMNQAATVDQCAIAHGNLTVVISTEPVISQPGPFSSGRTVQAQRSTIEIKQESGMLTMVEGASLAEVVKALNAIGATPQDLLAILQAMKSAGALRAELEII.

The first 33 residues, 1-33, serve as a signal peptide directing secretion; it reads MRYPVSTGIAAPAWFAFFCAWAGLWTFSLPVQA.

The protein belongs to the FlgI family. The basal body constitutes a major portion of the flagellar organelle and consists of four rings (L,P,S, and M) mounted on a central rod.

It is found in the periplasm. The protein localises to the bacterial flagellum basal body. Assembles around the rod to form the L-ring and probably protects the motor/basal body from shearing forces during rotation. The chain is Flagellar P-ring protein from Nitrosospira multiformis (strain ATCC 25196 / NCIMB 11849 / C 71).